Here is a 359-residue protein sequence, read N- to C-terminus: Spore germination protein GerQC (359 aa).

The N-terminal stretch at 1 to 16 is a signal peptide; the sequence is MKRWILFLILSVFLIG. A lipid anchor (N-palmitoyl cysteine) is attached at Cys17. Cys17 is lipidated: S-diacylglycerol cysteine.

The protein belongs to the GerABKC lipoprotein family.

It is found in the membrane. Its function is as follows. Required for the germination response to inosine. Has no role in L-alanine germination. The protein is Spore germination protein GerQC (gerQC) of Bacillus cereus.